A 238-amino-acid polypeptide reads, in one-letter code: Ribitol-5-phosphate cytidylyltransferase 2 (238 aa).

CTP-binding positions include 7-10 (LAGG) and 81-87 (GTDRNET).

Belongs to the IspD/TarI cytidylyltransferase family. TarI subfamily. As to quaternary structure, heterodimer together with TarJ.

It carries out the reaction D-ribitol 5-phosphate + CTP + H(+) = CDP-L-ribitol + diphosphate. Its pathway is cell wall biogenesis; poly(ribitol phosphate) teichoic acid biosynthesis. Catalyzes the transfer of the cytidylyl group of CTP to D-ribitol 5-phosphate. The protein is Ribitol-5-phosphate cytidylyltransferase 2 of Staphylococcus aureus (strain NCTC 8325 / PS 47).